The sequence spans 489 residues: UDP-N-acetylmuramate--L-alanine ligase (489 aa).

128–134 (GTHGKTT) is an ATP binding site.

The protein belongs to the MurCDEF family.

It localises to the cytoplasm. The enzyme catalyses UDP-N-acetyl-alpha-D-muramate + L-alanine + ATP = UDP-N-acetyl-alpha-D-muramoyl-L-alanine + ADP + phosphate + H(+). The protein operates within cell wall biogenesis; peptidoglycan biosynthesis. Cell wall formation. This is UDP-N-acetylmuramate--L-alanine ligase from Shewanella woodyi (strain ATCC 51908 / MS32).